The sequence spans 428 residues: MTWFIDRRLNGKNKSTVNRQRFLRRYKAQIKQSISEAINKRSVTDVDSGESVSIPTDDISEPMFHQGRGGLRHRVHPGNDHFIQNDRIERPQSGGGGGSGSGQGQASQDGEGQDEFVFQISKDEYLDLLFEDLALPNLKKNQHRQLNEYKTHRAGFTSNGVPANISVVRSLQNSLARRTAMTAGKRRELHALETELETISHSEPAQLLEEERLRREIAELRAKIERVPFIDTFDLRYKNYEKRPEPSSQAVMFCLMDVSGSMDQATKDMAKRFYILLYLFLSRTYKNVEVVYIRHHTQAKEVDEHEFFYSQETGGTIVSSALKLMDEVVKERYDPSQWNIYAAQASDGDNWADDSPLCHEILAKKLLPVVRYYSYIEITRRAHQTLWREYEHLQATFDNFAMQHIRDQEDIYPVFRELFQKQSANQSA.

Over residues 77-90 (PGNDHFIQNDRIER) the composition is skewed to basic and acidic residues. A disordered region spans residues 77-111 (PGNDHFIQNDRIERPQSGGGGGSGSGQGQASQDGE). Gly residues predominate over residues 93–103 (SGGGGGSGSGQ).

The protein belongs to the UPF0229 family.

The chain is UPF0229 protein YeaH from Salmonella typhi.